Reading from the N-terminus, the 140-residue chain is Small ribosomal subunit protein uS12 (140 aa).

A 3-methylthioaspartic acid modification is found at aspartate 102.

Belongs to the universal ribosomal protein uS12 family. As to quaternary structure, part of the 30S ribosomal subunit. Contacts proteins S8 and S17. May interact with IF1 in the 30S initiation complex.

With S4 and S5 plays an important role in translational accuracy. Functionally, interacts with and stabilizes bases of the 16S rRNA that are involved in tRNA selection in the A site and with the mRNA backbone. Located at the interface of the 30S and 50S subunits, it traverses the body of the 30S subunit contacting proteins on the other side and probably holding the rRNA structure together. The combined cluster of proteins S8, S12 and S17 appears to hold together the shoulder and platform of the 30S subunit. This Geobacillus sp. (strain WCH70) protein is Small ribosomal subunit protein uS12.